Here is a 912-residue protein sequence, read N- to C-terminus: Nitrate reductase [NADH] (912 aa).

The segment at 1-99 (SVEPRQPFGR…PRDEGTADAW (99 aa)) is disordered. The segment covering 13 to 23 (APATAPTARAP) has biased composition (low complexity). A compositionally biased stretch (acidic residues) spans 54–68 (AEEDEEDDDEDDEGH). Over residues 85–94 (PSTRDPRDEG) the composition is skewed to basic and acidic residues. Residue Cys-186 participates in Mo-molybdopterin binding. In terms of domain architecture, Cytochrome b5 heme-binding spans 535-610 (DKQFTMSEVR…LDTYRIGELI (76 aa)). 2 residues coordinate heme: His-570 and His-593. In terms of domain architecture, FAD-binding FR-type spans 651–764 (REKVPCRLVD…KGPLGHVEYT (114 aa)). Residues 703–706 (RAYT), 720–724 (LVKVY), Phe-725, Phe-732, 737–739 (LMT), Ser-788, and Thr-791 each bind FAD.

It belongs to the nitrate reductase family. Homodimer. FAD is required as a cofactor. The cofactor is heme. It depends on Mo-molybdopterin as a cofactor.

It carries out the reaction nitrite + NAD(+) + H2O = nitrate + NADH + H(+). Functionally, nitrate reductase is a key enzyme involved in the first step of nitrate assimilation in plants, fungi and bacteria. The protein is Nitrate reductase [NADH] of Hordeum vulgare (Barley).